The sequence spans 516 residues: NAD(P)H-quinone oxidoreductase chain 4, chloroplastic (516 aa).

Helical transmembrane passes span 4 to 24, 37 to 57, 87 to 107, 111 to 131, 134 to 154, 167 to 187, 208 to 228, 242 to 262, 272 to 292, 305 to 325, 330 to 350, 386 to 406, 416 to 436, and 462 to 482; these read FPWLTIIVVFPILTGSLIFLL, LCICILELLLTTYTFCYHFQL, IGPILLTGFITTLATLAAWPV, AQLFHFLMLAMYSGQIGSFSS, LLLFFLMWEFELIPVYLLLSM, FILYTAGGSIFLLIGVLGIGL, ALEVIFYVGFLIAFAVKLPII, HYSTCMLLAGILLKMGAYGLV, AHCLFSPGLIIVGAIQIIYAA, IAYSSISHMGFIIIGIGSLSD, GAILQIISHGFIGAALFFLAG, LALPGLSGFVAELLVFFGIIT, ILIAFLMAIGMILTPIYSLSM, and LFVSISLLLPIIGIGIYPDFV.

Belongs to the complex I subunit 4 family.

The protein resides in the plastid. It is found in the chloroplast thylakoid membrane. The catalysed reaction is a plastoquinone + NADH + (n+1) H(+)(in) = a plastoquinol + NAD(+) + n H(+)(out). It carries out the reaction a plastoquinone + NADPH + (n+1) H(+)(in) = a plastoquinol + NADP(+) + n H(+)(out). The protein is NAD(P)H-quinone oxidoreductase chain 4, chloroplastic of Oenothera argillicola (Appalachian evening primrose).